A 941-amino-acid polypeptide reads, in one-letter code: Protocadherin alpha-12 (941 aa).

Residues 1–29 (MVIIGPRGPGSQRLLLSLLLLAAWEVGSG) form the signal peptide. Cadherin domains are found at residues 30-133 (QLHY…PPVF), 134-242 (RERE…GPAF), 243-350 (DKPS…VPEV), 351-455 (MVTS…APAF), 456-565 (AQPE…APAL), and 581-678 (VPRS…APKT). Topologically, residues 30–697 (QLHYSVYEEA…DPEAALVDIN (668 aa)) are extracellular. N-linked (GlcNAc...) asparagine glycosylation is found at Asn-257 and Asn-265. Asn-548 carries an N-linked (GlcNAc...) asparagine glycan. Residues 698–718 (VYLIIAICAVSSLLVLTLLLY) traverse the membrane as a helical segment. Residues 719 to 941 (TALRCSAPPT…GNSTTDNSDQ (223 aa)) are Cytoplasmic-facing. 5 PXXP repeats span residues 734–737 (PGKP), 790–793 (PRQP), 823–826 (PGGP), 863–866 (GPGN), and 882–885 (PGSP). Residues 734 to 885 (PGKPTLVCSS…PDKFIIPGSP (152 aa)) form a 5 X 4 AA repeats of P-X-X-P region. The interval 818–941 (ILRAGPGGPD…GNSTTDNSDQ (124 aa)) is disordered. Positions 900 to 914 (DKSDFITFGKKEETK) are enriched in basic and acidic residues.

It localises to the cell membrane. Functionally, potential calcium-dependent cell-adhesion protein. May be involved in the establishment and maintenance of specific neuronal connections in the brain. This chain is Protocadherin alpha-12 (PCDHA12), found in Homo sapiens (Human).